We begin with the raw amino-acid sequence, 166 residues long: Ribosome maturation factor RimP (166 aa).

This sequence belongs to the RimP family.

Its subcellular location is the cytoplasm. Functionally, required for maturation of 30S ribosomal subunits. This is Ribosome maturation factor RimP from Paramagnetospirillum magneticum (strain ATCC 700264 / AMB-1) (Magnetospirillum magneticum).